The sequence spans 708 residues: Polyribonucleotide nucleotidyltransferase (708 aa).

Positions 485 and 491 each coordinate Mg(2+). In terms of domain architecture, KH spans 552 to 611 (PKTYIMSIPPDKIRDVIGSGGKVINKIIAETGVKIDIKEDGKIFVMSEDSEGAKKALKII). Residues 621–689 (GEIYLGKVTK…NQGRINLSRK (69 aa)) enclose the S1 motif domain. The tract at residues 689–708 (KDAIKDSEKKEQNEKDVQKK) is disordered.

The protein belongs to the polyribonucleotide nucleotidyltransferase family. Mg(2+) is required as a cofactor.

It localises to the cytoplasm. The enzyme catalyses RNA(n+1) + phosphate = RNA(n) + a ribonucleoside 5'-diphosphate. In terms of biological role, involved in mRNA degradation. Catalyzes the phosphorolysis of single-stranded polyribonucleotides processively in the 3'- to 5'-direction. In Clostridium kluyveri (strain NBRC 12016), this protein is Polyribonucleotide nucleotidyltransferase.